Here is a 429-residue protein sequence, read N- to C-terminus: MSLKLEVKTEIKLDYQGFQNQINEFHNRINDKNSPDINFLGWNNFPEVAINPQEIARMRKIVENLHQNSINVLVVIGIGGSYLGAKAALDFILGLGPFENKPEVIFLGNSLSSTDLYQKIEYLKTKNFAINVISKSGSTIEPAITFQILYQFLIDQIGEKLAKTRTFVTTSIKSGELLEIAKSNELEIFEVIESIGGRFSVLSSVGFFPLLFAKINVDEIIQGAIEAHKRYSTSSISQNLAYKYALFRFLMYKNFNYKTEILISYEPFLIYFNEWWKQLFGESEGKNLKGLFPASAIFTTDLHSLGQFIQDGSKNFFQTIIYIKKPKFDLGIKKIVQFNTKINKLSGKTVSEINFQAFLATTLAHSSYGNNPNLVLEIADSSPKTFGHLVMFFEKACAMSAYLLGVNPFDQPGVESYKNELAKNLGWDR.

E282 (proton donor) is an active-site residue. Residues H303 and K418 contribute to the active site.

The protein belongs to the GPI family.

The protein localises to the cytoplasm. The enzyme catalyses alpha-D-glucose 6-phosphate = beta-D-fructose 6-phosphate. Its pathway is carbohydrate biosynthesis; gluconeogenesis. The protein operates within carbohydrate degradation; glycolysis; D-glyceraldehyde 3-phosphate and glycerone phosphate from D-glucose: step 2/4. Catalyzes the reversible isomerization of glucose-6-phosphate to fructose-6-phosphate. This is Glucose-6-phosphate isomerase from Mesomycoplasma hyopneumoniae (strain J / ATCC 25934 / NCTC 10110) (Mycoplasma hyopneumoniae).